We begin with the raw amino-acid sequence, 198 residues long: Recombination protein RecR (198 aa).

The C4-type zinc-finger motif lies at 57–72; it reads CSVCGHITDRDPCYIC. Residues 80–175 form the Toprim domain; that stretch reads SVVCVVQEPK…KVTRIAHGLP (96 aa).

It belongs to the RecR family.

May play a role in DNA repair. It seems to be involved in an RecBC-independent recombinational process of DNA repair. It may act with RecF and RecO. This chain is Recombination protein RecR, found in Bacillus cytotoxicus (strain DSM 22905 / CIP 110041 / 391-98 / NVH 391-98).